The following is a 238-amino-acid chain: N-methyltransferase vrtF (238 aa).

It belongs to the methyltransferase superfamily.

It participates in secondary metabolite biosynthesis; terpenoid biosynthesis. N-methyltransferase; part of the gene cluster that mediates the biosynthesis of viridicatumtoxin, a tetracycline-like fungal meroterpenoid with a unique, fused spirobicyclic ring system. The first step of the pathway is the production of the malonamoyl-CoA starter unit for the polyketide synthase vrtA. The aldolase vrtJ may be involved in the synthesis of the malonamate substrate for malonamoyl-CoA synthetase vrtB. The polyketide synthase vrtA then may utilize the malonamoyl-CoA starter unit, followed by sequential condensation of eight malonyl-CoA units to form the polyketide backbone. The cyclization of the last ring could be mediated by the lactamase-like protein vrtG. The proposed post-PKS tailoring steps are a hydroxylation at C5 catalyzed the cytochrome P450 monooxygenase vrtE, a hydroxylation at C12a catalyzed by VrtH and/or VrtI, and an O-methylation by the O-methyltransferase vrtF. VrtC is then proposed to catalyze the transfer of a geranyl group synthesized by vrtD to the aromatic C ring of the tetracyclic polyketide intermediate of viridicatumtoxin to yield previridicatumtoxin. Finally, the cytochrome P450 monooxygenase vrtK catalyzes the spirocyclization of the geranyl moiety of previridicatumtoxin to afford viridicatumtoxin. The sequence is that of N-methyltransferase vrtF from Penicillium aethiopicum.